A 235-amino-acid polypeptide reads, in one-letter code: Orotidine 5'-phosphate decarboxylase (235 aa).

Substrate is bound by residues D12, K34, 61 to 70 (DMKLLDIDNT), T116, R177, Q186, G206, and R207. K63 acts as the Proton donor in catalysis.

It belongs to the OMP decarboxylase family. Type 1 subfamily. Homodimer.

The catalysed reaction is orotidine 5'-phosphate + H(+) = UMP + CO2. It functions in the pathway pyrimidine metabolism; UMP biosynthesis via de novo pathway; UMP from orotate: step 2/2. Functionally, catalyzes the decarboxylation of orotidine 5'-monophosphate (OMP) to uridine 5'-monophosphate (UMP). The protein is Orotidine 5'-phosphate decarboxylase of Rhizobium etli (strain ATCC 51251 / DSM 11541 / JCM 21823 / NBRC 15573 / CFN 42).